The chain runs to 222 residues: Probable nicotinate-nucleotide adenylyltransferase (222 aa).

The protein belongs to the NadD family.

It catalyses the reaction nicotinate beta-D-ribonucleotide + ATP + H(+) = deamido-NAD(+) + diphosphate. The protein operates within cofactor biosynthesis; NAD(+) biosynthesis; deamido-NAD(+) from nicotinate D-ribonucleotide: step 1/1. In terms of biological role, catalyzes the reversible adenylation of nicotinate mononucleotide (NaMN) to nicotinic acid adenine dinucleotide (NaAD). This Stenotrophomonas maltophilia (strain K279a) protein is Probable nicotinate-nucleotide adenylyltransferase.